We begin with the raw amino-acid sequence, 828 residues long: Periplasmic nitrate reductase (828 aa).

The segment at residues 1–31 is a signal peptide (tat-type signal); that stretch reads MKLSRRSFMKANAVAAAAAAAGLSVPGVARA. The region spanning 39–95 is the 4Fe-4S Mo/W bis-MGD-type domain; that stretch reads IKWDKAPCRFCGTGCGVLVGTQQGRVVACQGDPDAPVNRGLNCIKGYFLPKIMYGKD. [4Fe-4S] cluster is bound by residues Cys-46, Cys-49, Cys-53, and Cys-81. Residues Lys-83, Gln-150, Asn-175, Cys-179, 212–219, 243–247, 262–264, Met-372, Gln-376, Asn-482, 508–509, Lys-531, Asp-558, and 718–727 each bind Mo-bis(molybdopterin guanine dinucleotide); these read WGSNMAEM, STYQH, QSD, SD, and TGRVLEHWHT. Phe-794 lines the substrate pocket. Asn-802 and Lys-819 together coordinate Mo-bis(molybdopterin guanine dinucleotide).

It belongs to the prokaryotic molybdopterin-containing oxidoreductase family. NasA/NapA/NarB subfamily. In terms of assembly, component of the periplasmic nitrate reductase NapAB complex composed of NapA and NapB. [4Fe-4S] cluster is required as a cofactor. Mo-bis(molybdopterin guanine dinucleotide) serves as cofactor. Post-translationally, predicted to be exported by the Tat system. The position of the signal peptide cleavage has not been experimentally proven.

Its subcellular location is the periplasm. It catalyses the reaction 2 Fe(II)-[cytochrome] + nitrate + 2 H(+) = 2 Fe(III)-[cytochrome] + nitrite + H2O. In terms of biological role, catalytic subunit of the periplasmic nitrate reductase complex NapAB. Receives electrons from NapB and catalyzes the reduction of nitrate to nitrite. The sequence is that of Periplasmic nitrate reductase from Escherichia coli O81 (strain ED1a).